We begin with the raw amino-acid sequence, 184 residues long: UPF0301 protein ABSDF3201 (184 aa).

This sequence belongs to the UPF0301 (AlgH) family.

This is UPF0301 protein ABSDF3201 from Acinetobacter baumannii (strain SDF).